We begin with the raw amino-acid sequence, 525 residues long: GMP synthase [glutamine-hydrolyzing] (525 aa).

Residues 11 to 200 (PVLVVDFGAQ…LTEIAGLEQN (190 aa)) form the Glutamine amidotransferase type-1 domain. Catalysis depends on Cys88, which acts as the Nucleophile. Residues His174 and Glu176 contribute to the active site. In terms of domain architecture, GMPS ATP-PPase spans 201–399 (WTAANIAEEL…LGLPEEIVNR (199 aa)). ATP is bound at residue 229-235 (SGGVDSA).

As to quaternary structure, homodimer.

It catalyses the reaction XMP + L-glutamine + ATP + H2O = GMP + L-glutamate + AMP + diphosphate + 2 H(+). It participates in purine metabolism; GMP biosynthesis; GMP from XMP (L-Gln route): step 1/1. In terms of biological role, catalyzes the synthesis of GMP from XMP. This Corynebacterium diphtheriae (strain ATCC 700971 / NCTC 13129 / Biotype gravis) protein is GMP synthase [glutamine-hydrolyzing].